Reading from the N-terminus, the 232-residue chain is Clarin-1 (232 aa).

Residues Ile8–Val28 traverse the membrane as a helical segment. Residue Asn48 is glycosylated (N-linked (GlcNAc...) asparagine). 2 consecutive transmembrane segments (helical) span residues Ile101 to Tyr121 and Leu135 to Phe155. Residue Asn184 is glycosylated (N-linked (GlcNAc...) asparagine). The chain crosses the membrane as a helical span at residues Thr186–Ile206.

Belongs to the clarin family.

The protein resides in the cell membrane. In terms of biological role, may have a role in the excitatory ribbon synapse junctions between hair cells and cochlear ganglion cells and presumably also in analogous synapses within the retina. The polypeptide is Clarin-1 (Clrn1) (Mus musculus (Mouse)).